A 97-amino-acid polypeptide reads, in one-letter code: ESAT-6-like protein EsxA (97 aa).

It belongs to the WXG100 family. ESAT-6 subfamily. As to quaternary structure, forms a tight 1:1 complex with EsxB. Forms a complex with EccC and EsxB, probably wholly mediated by EsxB.

It is found in the secreted. May help regulate assembly and function of the type VII secretion system (T7SS). EsxA disassembles pre-formed EccC-EsxB multimers, possibly by making EccC-EsxA-EsxB trimers instead of EccC-EsxB-EsxB-EccC tetramers. This Thermomonospora curvata (strain ATCC 19995 / DSM 43183 / JCM 3096 / KCTC 9072 / NBRC 15933 / NCIMB 10081 / Henssen B9) protein is ESAT-6-like protein EsxA.